The chain runs to 540 residues: Glucose-6-phosphate isomerase (540 aa).

The Proton donor role is filled by Glu-350. Active-site residues include His-381 and Lys-503.

It belongs to the GPI family.

The protein resides in the cytoplasm. It carries out the reaction alpha-D-glucose 6-phosphate = beta-D-fructose 6-phosphate. The protein operates within carbohydrate biosynthesis; gluconeogenesis. Its pathway is carbohydrate degradation; glycolysis; D-glyceraldehyde 3-phosphate and glycerone phosphate from D-glucose: step 2/4. Functionally, catalyzes the reversible isomerization of glucose-6-phosphate to fructose-6-phosphate. This Burkholderia orbicola (strain MC0-3) protein is Glucose-6-phosphate isomerase.